Consider the following 464-residue polypeptide: GDNF family receptor alpha-2 (464 aa).

The first 21 residues, 1-21, serve as a signal peptide directing secretion; sequence MILANVFCLFFFLDETLRSLA. 14 disulfides stabilise this stretch: Cys-40/Cys-93, Cys-47/Cys-53, Cys-63/Cys-78, Cys-95/Cys-105, Cys-161/Cys-222, Cys-168/Cys-174, Cys-185/Cys-200, Cys-195/Cys-241, Cys-224/Cys-229, Cys-251/Cys-323, Cys-258/Cys-264, Cys-275/Cys-293, Cys-285/Cys-347, and Cys-325/Cys-335. Asn-52 is a glycosylation site (N-linked (GlcNAc...) asparagine). 2 N-linked (GlcNAc...) asparagine glycosylation sites follow: Asn-357 and Asn-413. Residue Ser-444 is the site of GPI-anchor amidated serine attachment. The propeptide at 445-464 is removed in mature form; that stretch reads RARPSAALTVLSVLMLKLAL.

Belongs to the GDNFR family. In terms of assembly, interacts with NRTN ligand and RET: forms a 2:2:2 ternary complex composed of NRTN ligand, GFRA2 and RET receptor. Also forms a 4:4:4 tetrameric complex composed of 4 copies of NRTN ligand, GFRA2 and RET receptor, which prevents endocytosis of RET. Interacts with SORL1.

The protein resides in the cell membrane. Receptor for neurturin (NRTN), a growth factor that supports the survival of sympathetic neurons. NRTN-binding leads to autophosphorylation and activation of the RET receptor. Also able to mediate GDNF signaling through the RET tyrosine kinase receptor. The chain is GDNF family receptor alpha-2 (GFRA2) from Pongo abelii (Sumatran orangutan).